Here is a 206-residue protein sequence, read N- to C-terminus: FMN-dependent NADH:quinone oxidoreductase 1 (206 aa).

Residues Ser-9, Ser-15 to Ser-17, and Ser-139 to Gly-142 each bind FMN.

This sequence belongs to the azoreductase type 1 family. As to quaternary structure, homodimer. The cofactor is FMN.

It catalyses the reaction 2 a quinone + NADH + H(+) = 2 a 1,4-benzosemiquinone + NAD(+). It carries out the reaction N,N-dimethyl-1,4-phenylenediamine + anthranilate + 2 NAD(+) = 2-(4-dimethylaminophenyl)diazenylbenzoate + 2 NADH + 2 H(+). Quinone reductase that provides resistance to thiol-specific stress caused by electrophilic quinones. In terms of biological role, also exhibits azoreductase activity. Catalyzes the reductive cleavage of the azo bond in aromatic azo compounds to the corresponding amines. The chain is FMN-dependent NADH:quinone oxidoreductase 1 from Cupriavidus pinatubonensis (strain JMP 134 / LMG 1197) (Cupriavidus necator (strain JMP 134)).